Here is a 669-residue protein sequence, read N- to C-terminus: Dynamin-related protein 4C (669 aa).

Positions 1-21 (MVKKKVATKKNSPSLAIAKKK) are disordered. The 262-residue stretch at 62-323 (GIHLPTIVVV…QSSMIARCLP (262 aa)) folds into the Dynamin-type G domain. The segment at 72–79 (GDQSSGKS) is G1 motif. Residue 72-79 (GDQSSGKS) coordinates GTP. Residues 97–99 (CTR) are G2 motif. The segment at 171–174 (DLPG) is G3 motif. Residues 171 to 175 (DLPGI) and 240 to 243 (TKAD) each bind GTP. The tract at residues 240–243 (TKAD) is G4 motif. Residue Glu-273 is a region of interest, G5 motif. Positions 575–669 (AFDMKMRITS…AVAAIVDQNC (95 aa)) constitute a GED domain.

The protein belongs to the TRAFAC class dynamin-like GTPase superfamily. Dynamin/Fzo/YdjA family.

The protein resides in the cytoplasm. The protein localises to the cytoskeleton. Its function is as follows. Putative microtubule-associated force-producing protein, able to bind and hydrolyze GTP. The chain is Dynamin-related protein 4C (DRP4C) from Arabidopsis thaliana (Mouse-ear cress).